Reading from the N-terminus, the 476-residue chain is NADH-quinone oxidoreductase subunit N (476 aa).

14 consecutive transmembrane segments (helical) span residues 10–30, 42–62, 77–97, 108–128, 129–149, 162–182, 202–222, 234–254, 268–288, 296–316, 323–343, 368–388, 392–412, and 445–465; these read AVLP…IGAI, LAIA…AVTI, FMKV…VDWL, AVLV…GDLI, ALYL…AINR, FVLG…IYGF, LVFG…AVPF, PTPV…AVFV, WQQI…FAAI, LLAY…AAGT, VLLY…CVLA, ALAL…AGFV, YVFL…GVVA, and AVLA…TPLI.

Belongs to the complex I subunit 2 family. As to quaternary structure, NDH-1 is composed of 14 different subunits. Subunits NuoA, H, J, K, L, M, N constitute the membrane sector of the complex.

The protein resides in the cell inner membrane. It carries out the reaction a quinone + NADH + 5 H(+)(in) = a quinol + NAD(+) + 4 H(+)(out). In terms of biological role, NDH-1 shuttles electrons from NADH, via FMN and iron-sulfur (Fe-S) centers, to quinones in the respiratory chain. The immediate electron acceptor for the enzyme in this species is believed to be ubiquinone. Couples the redox reaction to proton translocation (for every two electrons transferred, four hydrogen ions are translocated across the cytoplasmic membrane), and thus conserves the redox energy in a proton gradient. The polypeptide is NADH-quinone oxidoreductase subunit N (Azorhizobium caulinodans (strain ATCC 43989 / DSM 5975 / JCM 20966 / LMG 6465 / NBRC 14845 / NCIMB 13405 / ORS 571)).